We begin with the raw amino-acid sequence, 344 residues long: Glycerol-3-phosphate dehydrogenase [NAD(P)+] (344 aa).

NADPH contacts are provided by tryptophan 11, arginine 31, arginine 32, and lysine 105. Sn-glycerol 3-phosphate-binding residues include lysine 105, glycine 133, and serine 135. Alanine 137 provides a ligand contact to NADPH. Sn-glycerol 3-phosphate is bound by residues lysine 188, aspartate 241, serine 251, arginine 252, and asparagine 253. Lysine 188 serves as the catalytic Proton acceptor. Arginine 252 is an NADPH binding site. Residue glutamate 278 participates in NADPH binding.

The protein belongs to the NAD-dependent glycerol-3-phosphate dehydrogenase family.

The protein localises to the cytoplasm. It catalyses the reaction sn-glycerol 3-phosphate + NAD(+) = dihydroxyacetone phosphate + NADH + H(+). The enzyme catalyses sn-glycerol 3-phosphate + NADP(+) = dihydroxyacetone phosphate + NADPH + H(+). The protein operates within membrane lipid metabolism; glycerophospholipid metabolism. Functionally, catalyzes the reduction of the glycolytic intermediate dihydroxyacetone phosphate (DHAP) to sn-glycerol 3-phosphate (G3P), the key precursor for phospholipid synthesis. The polypeptide is Glycerol-3-phosphate dehydrogenase [NAD(P)+] (Acidithiobacillus ferrooxidans (strain ATCC 23270 / DSM 14882 / CIP 104768 / NCIMB 8455) (Ferrobacillus ferrooxidans (strain ATCC 23270))).